We begin with the raw amino-acid sequence, 122 residues long: MARIAGVNIPTNKRVVIALQYIHGIGQKNAAEIIEKVKIPADRRVSQLTDQEVLQIREVIDRDYLVEGDLRREVGINIKRLMDLGCYRGLRHRRGLPVRGQRTHTNARTRKGPAKSIAGKKK.

A disordered region spans residues 95–122 (GLPVRGQRTHTNARTRKGPAKSIAGKKK).

Belongs to the universal ribosomal protein uS13 family. Part of the 30S ribosomal subunit. Forms a loose heterodimer with protein S19. Forms two bridges to the 50S subunit in the 70S ribosome.

Located at the top of the head of the 30S subunit, it contacts several helices of the 16S rRNA. In the 70S ribosome it contacts the 23S rRNA (bridge B1a) and protein L5 of the 50S subunit (bridge B1b), connecting the 2 subunits; these bridges are implicated in subunit movement. Contacts the tRNAs in the A and P-sites. In Nitrobacter winogradskyi (strain ATCC 25391 / DSM 10237 / CIP 104748 / NCIMB 11846 / Nb-255), this protein is Small ribosomal subunit protein uS13.